Reading from the N-terminus, the 177-residue chain is Ubiquinol-cytochrome c reductase iron-sulfur subunit (177 aa).

Residues 18 to 38 (IVLTASSVAAVGAACAFWPII) traverse the membrane as a helical segment. A Rieske domain is found at 88-175 (ARAVKMSELI…YIFISDKKIR (88 aa)). Residues Cys120, His122, Cys139, and His142 each contribute to the [2Fe-2S] cluster site. Cysteines 125 and 141 form a disulfide.

Belongs to the Rieske iron-sulfur protein family. The main subunits of complex b-c1 are: cytochrome b, cytochrome c1 and the Rieske protein. It depends on [2Fe-2S] cluster as a cofactor.

Its subcellular location is the cell membrane. It catalyses the reaction a quinol + 2 Fe(III)-[cytochrome c](out) = a quinone + 2 Fe(II)-[cytochrome c](out) + 2 H(+)(out). Its function is as follows. Component of the ubiquinol-cytochrome c reductase complex (complex III or cytochrome b-c1 complex), which is a respiratory chain that generates an electrochemical potential coupled to ATP synthesis. This chain is Ubiquinol-cytochrome c reductase iron-sulfur subunit (petA), found in Rickettsia prowazekii (strain Madrid E).